The sequence spans 508 residues: Light-independent protochlorophyllide reductase subunit B (508 aa).

D36 contacts [4Fe-4S] cluster. The active-site Proton donor is D294. Position 429–430 (429–430) interacts with substrate; the sequence is GM.

This sequence belongs to the ChlB/BchB/BchZ family. In terms of assembly, protochlorophyllide reductase is composed of three subunits; ChlL, ChlN and ChlB. Forms a heterotetramer of two ChlB and two ChlN subunits. It depends on [4Fe-4S] cluster as a cofactor.

It carries out the reaction chlorophyllide a + oxidized 2[4Fe-4S]-[ferredoxin] + 2 ADP + 2 phosphate = protochlorophyllide a + reduced 2[4Fe-4S]-[ferredoxin] + 2 ATP + 2 H2O. Its pathway is porphyrin-containing compound metabolism; chlorophyll biosynthesis (light-independent). Its function is as follows. Component of the dark-operative protochlorophyllide reductase (DPOR) that uses Mg-ATP and reduced ferredoxin to reduce ring D of protochlorophyllide (Pchlide) to form chlorophyllide a (Chlide). This reaction is light-independent. The NB-protein (ChlN-ChlB) is the catalytic component of the complex. The sequence is that of Light-independent protochlorophyllide reductase subunit B from Nostoc punctiforme (strain ATCC 29133 / PCC 73102).